Reading from the N-terminus, the 757-residue chain is Nitrogen fixation protein FixI (757 aa).

The Cytoplasmic portion of the chain corresponds to 1–121; it reads MSCCASSAAI…GEEEGDDLLK (121 aa). Positions 37–107 constitute an HMA domain; that stretch reads RQTELSVPNA…AIAERGYQTH (71 aa). A metal cation contacts are provided by cysteine 48 and cysteine 51. Residues 122 to 143 traverse the membrane as a helical segment; that stretch reads QLILAVAVSGFAATNIMLLSVS. The Extracellular segment spans residues 144-158; it reads VWSGADAATRDLFHW. A helical membrane pass occupies residues 159–178; it reads ISALIAGPALIYAGRFFYKS. Residues 179–185 lie on the Cytoplasmic side of the membrane; the sequence is AWNAIRH. Residues 186–206 traverse the membrane as a helical segment; sequence GRTNMDVPIALAVSLSYGMSL. Over 207-218 the chain is Extracellular; sequence HETIGHGEHAWF. The helical transmembrane segment at 219-239 threads the bilayer; that stretch reads DASVTLLFFLLIGRTLDHMMR. Residues 240-368 lie on the Cytoplasmic side of the membrane; that stretch reads GRARTAISGL…RARYRRIADR (129 aa). A helical membrane pass occupies residues 369–391; it reads AARYYSPAVHLLALLTFVGWMLV. Topologically, residues 392 to 398 are extracellular; that stretch reads EGDVRHA. A helical membrane pass occupies residues 399–416; sequence MLVAVAVLIITCPCALGL. At 417–688 the chain is on the cytoplasmic side; that stretch reads AVPVVQVVAA…ETSRHAGQLI (272 aa). The active-site 4-aspartylphosphate intermediate is aspartate 454. Mg(2+) contacts are provided by aspartate 634 and aspartate 638. The chain crosses the membrane as a helical span at residues 689–708; sequence RQNFALAIGYNVIAVPIAIL. Over 709-713 the chain is Extracellular; that stretch reads GYATP. A helical membrane pass occupies residues 714–732; that stretch reads LVAAVAMSSSSLVVVFNAL. At 733 to 757 the chain is on the cytoplasmic side; that stretch reads RLKRSLAAGRGATPGTLIHSGAVTS.

Belongs to the cation transport ATPase (P-type) (TC 3.A.3) family. Type IB subfamily.

The protein localises to the cell membrane. It carries out the reaction ATP + H2O = ADP + phosphate + H(+). In terms of biological role, fixI is a pump of a specific cation involved in symbiotic nitrogen fixation. The four proteins FixG, FixH, FixI, and FixS may participate in a membrane-bound complex coupling the FixI cation pump with a redox process catalyzed by FixG. This Rhizobium meliloti (strain 1021) (Ensifer meliloti) protein is Nitrogen fixation protein FixI (fixI).